A 493-amino-acid chain; its full sequence is 3-octaprenyl-4-hydroxybenzoate carboxy-lyase (493 aa).

Asn172 serves as a coordination point for Mn(2+). Prenylated FMN contacts are provided by residues 175 to 177 (IYR), 189 to 191 (RWL), and 194 to 195 (RG). Glu238 lines the Mn(2+) pocket. Residue Asp287 is the Proton donor of the active site.

Belongs to the UbiD family. As to quaternary structure, homohexamer. The cofactor is prenylated FMN. Mn(2+) is required as a cofactor.

Its subcellular location is the cell membrane. It catalyses the reaction a 4-hydroxy-3-(all-trans-polyprenyl)benzoate + H(+) = a 2-(all-trans-polyprenyl)phenol + CO2. It participates in cofactor biosynthesis; ubiquinone biosynthesis. Catalyzes the decarboxylation of 3-octaprenyl-4-hydroxy benzoate to 2-octaprenylphenol, an intermediate step in ubiquinone biosynthesis. The chain is 3-octaprenyl-4-hydroxybenzoate carboxy-lyase from Shewanella baltica (strain OS195).